The following is a 360-amino-acid chain: Phospho-N-acetylmuramoyl-pentapeptide-transferase (360 aa).

Transmembrane regions (helical) follow at residues 27–47, 74–94, 99–119, 135–155, 165–185, 199–219, 236–256, 263–283, 288–308, and 337–357; these read GATA…IAAL, TMGG…WANL, VWVV…DDYL, LLLE…LGTP, INGF…FVIV, GLAI…AYLA, AGEL…FLWF, IFMG…VAVA, IVLA…IVQV, and QVVV…LSTL.

The protein belongs to the glycosyltransferase 4 family. MraY subfamily. It depends on Mg(2+) as a cofactor.

The protein localises to the cell inner membrane. The enzyme catalyses UDP-N-acetyl-alpha-D-muramoyl-L-alanyl-gamma-D-glutamyl-meso-2,6-diaminopimeloyl-D-alanyl-D-alanine + di-trans,octa-cis-undecaprenyl phosphate = di-trans,octa-cis-undecaprenyl diphospho-N-acetyl-alpha-D-muramoyl-L-alanyl-D-glutamyl-meso-2,6-diaminopimeloyl-D-alanyl-D-alanine + UMP. The protein operates within cell wall biogenesis; peptidoglycan biosynthesis. Its function is as follows. Catalyzes the initial step of the lipid cycle reactions in the biosynthesis of the cell wall peptidoglycan: transfers peptidoglycan precursor phospho-MurNAc-pentapeptide from UDP-MurNAc-pentapeptide onto the lipid carrier undecaprenyl phosphate, yielding undecaprenyl-pyrophosphoryl-MurNAc-pentapeptide, known as lipid I. In Methylocella silvestris (strain DSM 15510 / CIP 108128 / LMG 27833 / NCIMB 13906 / BL2), this protein is Phospho-N-acetylmuramoyl-pentapeptide-transferase.